Reading from the N-terminus, the 430-residue chain is tRNA(Ile)-lysidine synthase (430 aa).

S21 to S26 provides a ligand contact to ATP.

It belongs to the tRNA(Ile)-lysidine synthase family.

It is found in the cytoplasm. It carries out the reaction cytidine(34) in tRNA(Ile2) + L-lysine + ATP = lysidine(34) in tRNA(Ile2) + AMP + diphosphate + H(+). Functionally, ligates lysine onto the cytidine present at position 34 of the AUA codon-specific tRNA(Ile) that contains the anticodon CAU, in an ATP-dependent manner. Cytidine is converted to lysidine, thus changing the amino acid specificity of the tRNA from methionine to isoleucine. The protein is tRNA(Ile)-lysidine synthase of Salmonella paratyphi B (strain ATCC BAA-1250 / SPB7).